A 1052-amino-acid chain; its full sequence is Error-prone DNA polymerase (1052 aa).

The protein belongs to the DNA polymerase type-C family. DnaE2 subfamily.

It localises to the cytoplasm. It catalyses the reaction DNA(n) + a 2'-deoxyribonucleoside 5'-triphosphate = DNA(n+1) + diphosphate. Its function is as follows. DNA polymerase involved in damage-induced mutagenesis and translesion synthesis (TLS). It is not the major replicative DNA polymerase. This is Error-prone DNA polymerase from Bordetella bronchiseptica (strain ATCC BAA-588 / NCTC 13252 / RB50) (Alcaligenes bronchisepticus).